Consider the following 318-residue polypeptide: Aspartate carbamoyltransferase catalytic subunit (318 aa).

Arginine 54 and threonine 55 together coordinate carbamoyl phosphate. Lysine 82 contributes to the L-aspartate binding site. Carbamoyl phosphate is bound by residues arginine 104, histidine 134, and glutamine 137. Residues arginine 174 and arginine 230 each contribute to the L-aspartate site. Carbamoyl phosphate is bound by residues glycine 271 and proline 272.

Belongs to the aspartate/ornithine carbamoyltransferase superfamily. ATCase family. Heterododecamer (2C3:3R2) of six catalytic PyrB chains organized as two trimers (C3), and six regulatory PyrI chains organized as three dimers (R2).

The enzyme catalyses carbamoyl phosphate + L-aspartate = N-carbamoyl-L-aspartate + phosphate + H(+). It participates in pyrimidine metabolism; UMP biosynthesis via de novo pathway; (S)-dihydroorotate from bicarbonate: step 2/3. Its function is as follows. Catalyzes the condensation of carbamoyl phosphate and aspartate to form carbamoyl aspartate and inorganic phosphate, the committed step in the de novo pyrimidine nucleotide biosynthesis pathway. The protein is Aspartate carbamoyltransferase catalytic subunit of Clavibacter michiganensis subsp. michiganensis (strain NCPPB 382).